Consider the following 314-residue polypeptide: L-lactate dehydrogenase 2 (314 aa).

Residues V16, D37, K42, Y68, and 82-83 each bind NAD(+); that span reads GL. Substrate-binding positions include Q85, R91, and 123 to 126; that span reads NPVD. NAD(+) contacts are provided by residues 121 to 123 and S146; that span reads ATN. Residue 151–154 coordinates substrate; it reads DSAR. Positions 156 and 171 each coordinate beta-D-fructose 1,6-bisphosphate. The active-site Proton acceptor is H178. Y223 is modified (phosphotyrosine). Position 232 (T232) interacts with substrate.

This sequence belongs to the LDH/MDH superfamily. LDH family. As to quaternary structure, homotetramer.

It is found in the cytoplasm. The catalysed reaction is (S)-lactate + NAD(+) = pyruvate + NADH + H(+). The protein operates within fermentation; pyruvate fermentation to lactate; (S)-lactate from pyruvate: step 1/1. Allosterically activated by fructose 1,6-bisphosphate (FBP). Catalyzes the conversion of lactate to pyruvate. The chain is L-lactate dehydrogenase 2 from Bacillus anthracis.